The sequence spans 467 residues: A-type ATP synthase subunit B (467 aa).

A disordered region spans residues 95–114 (GKGQPRDHMPLPPPEDFRDV).

It belongs to the ATPase alpha/beta chains family. As to quaternary structure, has multiple subunits with at least A(3), B(3), C, D, E, F, H, I and proteolipid K(x).

It is found in the cell membrane. Functionally, component of the A-type ATP synthase that produces ATP from ADP in the presence of a proton gradient across the membrane. The B chain is a regulatory subunit. This chain is A-type ATP synthase subunit B, found in Pyrobaculum neutrophilum (strain DSM 2338 / JCM 9278 / NBRC 100436 / V24Sta) (Thermoproteus neutrophilus).